We begin with the raw amino-acid sequence, 57 residues long: Large ribosomal subunit protein bL32 (57 aa).

The protein belongs to the bacterial ribosomal protein bL32 family.

The protein is Large ribosomal subunit protein bL32 of Lysinibacillus sphaericus (strain C3-41).